The chain runs to 361 residues: Peptide chain release factor 1 (361 aa).

N5-methylglutamine is present on Q235. The segment at 288 to 307 (AAEAQTRKLQVGSGDRSQRI) is disordered.

This sequence belongs to the prokaryotic/mitochondrial release factor family. Post-translationally, methylated by PrmC. Methylation increases the termination efficiency of RF1.

The protein resides in the cytoplasm. Its function is as follows. Peptide chain release factor 1 directs the termination of translation in response to the peptide chain termination codons UAG and UAA. This chain is Peptide chain release factor 1, found in Xanthomonas axonopodis pv. citri (strain 306).